A 416-amino-acid chain; its full sequence is 5-methylthioadenosine/S-adenosylhomocysteine deaminase 2 (416 aa).

Histidine 58 and histidine 60 together coordinate Zn(2+). Residues glutamate 86 and histidine 178 each coordinate substrate. Histidine 205 provides a ligand contact to Zn(2+). Residues glutamate 208 and aspartate 293 each coordinate substrate. Zn(2+) is bound at residue aspartate 293.

Belongs to the metallo-dependent hydrolases superfamily. MTA/SAH deaminase family. Requires Zn(2+) as cofactor.

The enzyme catalyses S-adenosyl-L-homocysteine + H2O + H(+) = S-inosyl-L-homocysteine + NH4(+). It catalyses the reaction S-methyl-5'-thioadenosine + H2O + H(+) = S-methyl-5'-thioinosine + NH4(+). Functionally, catalyzes the deamination of 5-methylthioadenosine and S-adenosyl-L-homocysteine into 5-methylthioinosine and S-inosyl-L-homocysteine, respectively. Is also able to deaminate adenosine. The polypeptide is 5-methylthioadenosine/S-adenosylhomocysteine deaminase 2 (Archaeoglobus fulgidus (strain ATCC 49558 / DSM 4304 / JCM 9628 / NBRC 100126 / VC-16)).